Reading from the N-terminus, the 357-residue chain is D-alanine--D-alanine ligase (357 aa).

One can recognise an ATP-grasp domain in the interval 134 to 339; the sequence is KQLFEHRGLP…YPDLIAKLID (206 aa). Residue 167 to 222 coordinates ATP; sequence NDKLTYPVFVKPANLGSSVGISKCNNEEELKSGITEAFQFDRKLVIEQGINAREIE. The Mg(2+) site is built by Asp293, Glu306, and Asn308.

This sequence belongs to the D-alanine--D-alanine ligase family. Mg(2+) is required as a cofactor. The cofactor is Mn(2+).

Its subcellular location is the cytoplasm. The enzyme catalyses 2 D-alanine + ATP = D-alanyl-D-alanine + ADP + phosphate + H(+). Its pathway is cell wall biogenesis; peptidoglycan biosynthesis. Functionally, cell wall formation. The sequence is that of D-alanine--D-alanine ligase from Staphylococcus epidermidis (strain ATCC 12228 / FDA PCI 1200).